Reading from the N-terminus, the 334-residue chain is Ribonucleoside-diphosphate reductase small chain (334 aa).

Positions 77, 108, and 111 each coordinate Fe cation. The active site involves tyrosine 115. Fe cation-binding residues include glutamate 171, glutamate 205, and histidine 208.

Belongs to the ribonucleoside diphosphate reductase small chain family. In terms of assembly, heterotetramer composed of a homodimer of the large subunit (R1) and a homodimer of the small subunit (R2). Larger multisubunit protein complex are also active, composed of (R1)n(R2)n. Requires Fe cation as cofactor.

The enzyme catalyses a 2'-deoxyribonucleoside 5'-diphosphate + [thioredoxin]-disulfide + H2O = a ribonucleoside 5'-diphosphate + [thioredoxin]-dithiol. Functionally, ribonucleoside-diphosphate reductase holoenzyme provides the precursors necessary for viral DNA synthesis. Allows virus growth in non-dividing cells. Catalyzes the biosynthesis of deoxyribonucleotides from the corresponding ribonucleotides. The polypeptide is Ribonucleoside-diphosphate reductase small chain (Ornithodoros (relapsing fever ticks)).